We begin with the raw amino-acid sequence, 55 residues long: ATP synthase small subunit 6-A, mitochondrial (55 aa).

The transit peptide at 1-11 (MRLFDPWPVFF) directs the protein to the mitochondrion. The helical transmembrane segment at 21–39 (FLTGFAVTGVLITKLTAGL) threads the bilayer.

This sequence belongs to the ATPase 6 subunit family.

The protein resides in the mitochondrion inner membrane. In terms of biological role, mitochondrial membrane ATP synthase (F(1)F(0) ATP synthase or Complex V) produces ATP from ADP in the presence of a proton gradient across the membrane which is generated by electron transport complexes of the respiratory chain. F-type ATPases consist of two structural domains, F(1) - containing the extramembraneous catalytic core and F(0) - containing the membrane proton channel, linked together by a central stalk and a peripheral stalk. During catalysis, ATP synthesis in the catalytic domain of F(1) is coupled via a rotary mechanism of the central stalk subunits to proton translocation. Part of the complex F(0) domain. Confers tolerance to several abiotic stresses (e.g. salt, mannitol, drought, oxidative and cold stresses), probably by providing additional energy needed for cell homeostasis. The protein is ATP synthase small subunit 6-A, mitochondrial of Arabidopsis thaliana (Mouse-ear cress).